A 509-amino-acid polypeptide reads, in one-letter code: Cytochrome P450 monooxygenase cpaH (509 aa).

A glycan (N-linked (GlcNAc...) asparagine) is linked at Asn15. The chain crosses the membrane as a helical span at residues 31 to 51; sequence TTILLIGVTYCILVGIYRVTL. 2 N-linked (GlcNAc...) asparagine glycosylation sites follow: Asn306 and Asn412. Cys453 lines the heme pocket.

Belongs to the cytochrome P450 family. It depends on heme as a cofactor.

The protein localises to the membrane. It participates in secondary metabolite biosynthesis. Functionally, cytochrome P450 monooxygenase; part of the gene cluster that mediates the biosynthesis of the fungal neurotoxin cyclopiazonic acid (CPA), a nanomolar inhibitor of Ca(2+)-ATPase with a unique pentacyclic indole tetramic acid scaffold. The hybrid two module polyketide synthase-nonribosomal peptide synthetase (PKS-NRPS) cpaS incorporates acetyl-CoA, malonyl-CoA, and tryptophan (Trp) and utilizes a C-terminal redox-incompetent reductase domain to make and release the tryptophan tetramic acid, cyclo-acetoacetyl-L-tryptophan (c-AATrp), as the first intermediate in the pathway. CpaS catalyzes a Dieckmann-type cyclization on the N-acetoacetyl-Trp intermediate bound in thioester linkage to the phosphopantetheinyl arm of the T domain to form and release c-AATrp. CpaD then regiospecifically dimethylallylates c-AATrp to form beta-cyclopiazonic acid. CpaD discriminates against free Trp but accepts tryptophan-containing thiohydantoins, diketopiperazines, and linear peptides as substrates for C4-prenylation and also acts as a regiospecific O-dimethylallyltransferase (DMAT) on a tyrosine-derived tetramic acid. The beta-cyclopiazonate dehydrogenase cpaO then carries out the dehydrogenation of beta-CPA to yield an unstable enimine product, which is captured by intramolecular cyclization to create the pentacyclic fused scaffold of alpha-cyclopiazonate. Finally, the cytochrome P450 monooxygenase cpaH mediates the conversion of CPA into the less toxic 2-oxocyclopiazonic acid, the end product of the CPA pathway in A.oryza. The protein is Cytochrome P450 monooxygenase cpaH of Aspergillus oryzae (Yellow koji mold).